A 430-amino-acid polypeptide reads, in one-letter code: RPM1 interacting protein 13 (430 aa).

The segment at 1–21 (MGSGNHVDIVDVSSGEEDVDT) is disordered. Residues 231 to 300 (RHRIRQPIPH…QVSQSSHHSS (70 aa)) are nuclear localization.

In terms of assembly, interacts with RPM1 (via its NB-ARC domain). Binds to ARF1 in the nucleus.

It is found in the nucleus. Its function is as follows. Resistance protein interactor which positively enhances RPM1-mediated resistance to necrotrophic bacterial pathogens Pseudomonas syringae pv. tomato DC3000 harboring type III effector protein AvrRpm1 or AvrB, but prevents the hypersensitive response (HR) controlled by RPM1. Together with ARF1, promotes leaf senescence and cell death, probably by facilitating the translocation of ARF1 into the nucleus, and activates ROS-related enzymes (e.g. POD, CAT and SOD). This is RPM1 interacting protein 13 from Arabidopsis thaliana (Mouse-ear cress).